Reading from the N-terminus, the 307-residue chain is tRNA dimethylallyltransferase 2 (307 aa).

9 to 16 (GPTAVGKT) serves as a coordination point for ATP. A substrate-binding site is contributed by 11–16 (TAVGKT). The interval 34-37 (DSRQ) is interaction with substrate tRNA.

The protein belongs to the IPP transferase family. In terms of assembly, monomer. Mg(2+) serves as cofactor.

It carries out the reaction adenosine(37) in tRNA + dimethylallyl diphosphate = N(6)-dimethylallyladenosine(37) in tRNA + diphosphate. Its function is as follows. Catalyzes the transfer of a dimethylallyl group onto the adenine at position 37 in tRNAs that read codons beginning with uridine, leading to the formation of N6-(dimethylallyl)adenosine (i(6)A). In Azobacteroides pseudotrichonymphae genomovar. CFP2, this protein is tRNA dimethylallyltransferase 2.